The primary structure comprises 575 residues: Protein NRD1 (575 aa).

Residues 1 to 153 enclose the CID domain; it reads MQQDDDFQNF…AIRSKCFAMD (153 aa). Residues 225–282 are disordered; the sequence is SHTSVGTVAPPQAHTITEYGSRRERERERERYNSRRNRSRSPPAPFSQPSTGRKDRYP. Residues 244–257 are compositionally biased toward basic and acidic residues; the sequence is GSRRERERERERYN. Residues S263, S265, and S271 each carry the phosphoserine modification. Positions 339–409 constitute an RRM domain; sequence RTLFIGGVPL…LPLRTRWGVG (71 aa). The tract at residues 468 to 575 is disordered; that stretch reads VSSKAISQKM…NQQQQQQQQS (108 aa). 2 stretches are compositionally biased toward polar residues: residues 471–482 and 491–501; these read KAISQKMPTDSG and PNKSGSISSIS. Composition is skewed to low complexity over residues 517-527 and 549-575; these read QYVQPMMQQPY and QQQF…QQQS.

The protein localises to the nucleus. In terms of biological role, plays a role in sequence-specific regulation of nuclear pre-mRNA abundance. The polypeptide is Protein NRD1 (NRD1) (Saccharomyces cerevisiae (strain ATCC 204508 / S288c) (Baker's yeast)).